We begin with the raw amino-acid sequence, 393 residues long: Erythronate-4-phosphate dehydrogenase (393 aa).

The substrate site is built by S57 and T79. Residue D159 participates in NAD(+) binding. R229 is a catalytic residue. D253 provides a ligand contact to NAD(+). E258 is an active-site residue. H275 functions as the Proton donor in the catalytic mechanism. Residue G278 coordinates NAD(+). Residue Y279 participates in substrate binding.

Belongs to the D-isomer specific 2-hydroxyacid dehydrogenase family. PdxB subfamily. Homodimer.

Its subcellular location is the cytoplasm. The catalysed reaction is 4-phospho-D-erythronate + NAD(+) = (R)-3-hydroxy-2-oxo-4-phosphooxybutanoate + NADH + H(+). It participates in cofactor biosynthesis; pyridoxine 5'-phosphate biosynthesis; pyridoxine 5'-phosphate from D-erythrose 4-phosphate: step 2/5. Catalyzes the oxidation of erythronate-4-phosphate to 3-hydroxy-2-oxo-4-phosphonooxybutanoate. This is Erythronate-4-phosphate dehydrogenase from Colwellia psychrerythraea (strain 34H / ATCC BAA-681) (Vibrio psychroerythus).